Reading from the N-terminus, the 158-residue chain is 2-C-methyl-D-erythritol 2,4-cyclodiphosphate synthase (158 aa).

Positions 9 and 11 each coordinate a divalent metal cation. 4-CDP-2-C-methyl-D-erythritol 2-phosphate-binding positions include 9–11 (DVH) and 35–36 (HS). His43 contributes to the a divalent metal cation binding site. 4-CDP-2-C-methyl-D-erythritol 2-phosphate contacts are provided by residues 57–59 (DIG), 62–66 (FPDTD), 101–107 (AQKPKMA), 133–136 (TTTE), Phe140, and Arg143.

This sequence belongs to the IspF family. In terms of assembly, homotrimer. A divalent metal cation is required as a cofactor.

It catalyses the reaction 4-CDP-2-C-methyl-D-erythritol 2-phosphate = 2-C-methyl-D-erythritol 2,4-cyclic diphosphate + CMP. It functions in the pathway isoprenoid biosynthesis; isopentenyl diphosphate biosynthesis via DXP pathway; isopentenyl diphosphate from 1-deoxy-D-xylulose 5-phosphate: step 4/6. Its function is as follows. Involved in the biosynthesis of isopentenyl diphosphate (IPP) and dimethylallyl diphosphate (DMAPP), two major building blocks of isoprenoid compounds. Catalyzes the conversion of 4-diphosphocytidyl-2-C-methyl-D-erythritol 2-phosphate (CDP-ME2P) to 2-C-methyl-D-erythritol 2,4-cyclodiphosphate (ME-CPP) with a corresponding release of cytidine 5-monophosphate (CMP). This Bacillus cereus (strain B4264) protein is 2-C-methyl-D-erythritol 2,4-cyclodiphosphate synthase.